Here is a 200-residue protein sequence, read N- to C-terminus: MLIQNDRRMQRILSGLAVAVAILVPVLALASGGGEHHPDSGAQLKDFGWRVVDFALLAGIMIWALKKANVKGSLAERQLQIEKNLREAREARETAEAKLKEYTEKLEKANQEVDTLRAAMLKEAEAEKQRIVAEAQAAAAKVTEQAAQAADQEVLKARTELRVEAARLAVELAGGKLGAAVQKADHDRFVQDYLGKVVQL.

Residues 12-32 form a helical membrane-spanning segment; the sequence is ILSGLAVAVAILVPVLALASG.

Belongs to the ATPase B chain family. As to quaternary structure, F-type ATPases have 2 components, F(1) - the catalytic core - and F(0) - the membrane proton channel. F(1) has five subunits: alpha(3), beta(3), gamma(1), delta(1), epsilon(1). F(0) has three main subunits: a(1), b(2) and c(10-14). The alpha and beta chains form an alternating ring which encloses part of the gamma chain. F(1) is attached to F(0) by a central stalk formed by the gamma and epsilon chains, while a peripheral stalk is formed by the delta and b chains.

The protein localises to the cell inner membrane. Functionally, f(1)F(0) ATP synthase produces ATP from ADP in the presence of a proton or sodium gradient. F-type ATPases consist of two structural domains, F(1) containing the extramembraneous catalytic core and F(0) containing the membrane proton channel, linked together by a central stalk and a peripheral stalk. During catalysis, ATP synthesis in the catalytic domain of F(1) is coupled via a rotary mechanism of the central stalk subunits to proton translocation. Component of the F(0) channel, it forms part of the peripheral stalk, linking F(1) to F(0). This is ATP synthase subunit b from Trichlorobacter lovleyi (strain ATCC BAA-1151 / DSM 17278 / SZ) (Geobacter lovleyi).